Consider the following 146-residue polypeptide: Hemoglobin subunit beta-2 (146 aa).

In terms of domain architecture, Globin spans Phe2–His146. An N6-succinyllysine modification is found at Lys17. Residues Ser44 and Ser50 each carry the phosphoserine modification. Lys59 bears the N6-succinyllysine mark. Heme b is bound by residues His63 and His92. Arg104 is modified (asymmetric dimethylarginine).

It belongs to the globin family. As to quaternary structure, heterotetramer of two alpha chains and two beta chains. Red blood cells.

Its function is as follows. Involved in oxygen transport from the lung to the various peripheral tissues. The protein is Hemoglobin subunit beta-2 (HBB2) of Panthera pardus saxicolor (Northern Persian leopard).